The chain runs to 608 residues: MDNLSDTLKKLKITAVDRTDDSLEGCLDCLLQALTQNNMETSEKIQGSGILQVFASLLIPQSSCTAKVANVIAEIAKNEFMRIPCVDAGLISPLVQLLNSKDQEVLLQTGRALGNICYDSHEGRSAVDQAGGAQIVVDHLRSLCSKTDPASEKLLTVFCGMLMNYSNEKNDSLQAQLINMGVIPTLVKLLGIHCQKAALTEMCLVAFGNLAELESSKEQFASTNIAEELVKLFKKQIEHDKREMVFEVLAPLAENDAIKLQLVESGLVECLLEIVQQKVDSDKEEDIAELKTASDLMVLLLLGDESMQKLFEGGKGNVFQRVLSWIPSNNHQLQLAGALAIANFARNDGNCIHMVDNGIVEKLMDLLDRHVEDGNVTVQHAALSCLRNLAIPVVNKAKMLSAGVTEAVLKFLKSEMPPVQFKLLGTLRMLIDAQAEAAEQLGKNVKLVERLVEWCEAKDHAGVMGESNRLLSALIRHSKSKDVIKTIVQSGGIKHLVTMATSEHVIMQNEALVALALIAALELGTAEKDLESAQLVQILHRLLADERSAPEIKYNSMVLICALMGSESLHKEVQDLAFLDVVSKLRSHENKSVAQQASLTEQRLAVES.

ARM repeat units lie at residues 89–131 (GLIS…DQAG) and 171–212 (DSLQ…NLAE). The prevents binding to prenylated RHOA stretch occupies residues 122-171 (EGRSAVDQAGGAQIVVDHLRSLCSKTDPASEKLLTVFCGMLMNYSNEKND). K231 carries the post-translational modification N6-acetyllysine. ARM repeat units lie at residues 348–391 (DGNC…NLAI), 392–432 (PVVN…MLID), and 480–520 (SKDV…LIAA).

In terms of assembly, interacts with RABL3. Interacts with RHOT1. Interacts with unprenylated RHOA; the interaction is direct. Interacts with RAP1A. Interacts with KRAS. Interacts with RAC1. Interacts with RAP1B. Preferentially interacts with unprenylated GTPases that will become geranylgeranylated. May also interact with prenylated GTPases. As to quaternary structure, interacts with prenylated RHOA; the interaction is direct and in a 1:1 stoichiometry. Interacts with RAP1A. Interacts with KRAS. Interacts with RAC1. Interacts with RAP1B. Preferentially interacts with prenylated GTPases. In terms of processing, the N-terminus is blocked. Forms covalent cross-links mediated by transglutaminase TGM2, between a glutamine and the epsilon-amino group of a lysine residue, forming homopolymers and heteropolymers. As to expression, brain.

Its subcellular location is the cytoplasm. It localises to the cytosol. The protein localises to the endoplasmic reticulum. It is found in the mitochondrion. The protein resides in the nucleus. Acts as a GEF (guanine nucleotide exchange factor) for the Rho family of small GTP-binding proteins (G proteins) that stimulates the dissociation of GDP to enable subsequent binding of GTP. Additionally, appears to chaperone the processing and/or trafficking of small GTPases containing a C-terminal polybasic region independently of GEF activity. Targets include RAP1A/RAP1B, RHOA, RHOB, RHOC, RAC1 and KRAS. Regulates mitochondrial dynamics by controlling RHOT function to promote mitochondrial fission during high calcium conditions. Able to promote the Ca(2+) release from the endoplasmic reticulum via both inositol trisphosphate (Ins3P) and ryanodine sensitive receptors leading to a enhanced mitochondrial Ca(2+) uptake. In terms of biological role, acts as a GEF (guanine nucleotide exchange factor) for unprenylated RHOA. Chaperones the entry and passage of small GTPases through the prenylation pathway. Recognizes the last amino acid in the GTPase C-terminal CAAX motif with a preference for 'Leu' over 'Met', indicating involvement in the geranylgeranylation pathway. May also recognize prenylated GTPases. Functionally, acts as a GEF (guanine nucleotide exchange factor) for prenylated RHOA. Acts as a GEF for RHOC. Chaperones the downstream trafficking and/or processing of small newly prenylated GTPases. Escorts RAC1 to the nucleus. In Bos taurus (Bovine), this protein is Rap1 GTPase-GDP dissociation stimulator 1 (RAP1GDS1).